An 853-amino-acid polypeptide reads, in one-letter code: DNA mismatch repair protein MutS (853 aa).

613–620 (GPNMGGKS) provides a ligand contact to ATP.

This sequence belongs to the DNA mismatch repair MutS family.

Its function is as follows. This protein is involved in the repair of mismatches in DNA. It is possible that it carries out the mismatch recognition step. This protein has a weak ATPase activity. This chain is DNA mismatch repair protein MutS, found in Vibrio parahaemolyticus serotype O3:K6 (strain RIMD 2210633).